The primary structure comprises 621 residues: Nuclear distribution protein nudE homolog 1 (621 aa).

Composition is skewed to polar residues over residues 1–20 and 231–263; these read MPSA…SRSD and RSPS…TLKT. 4 disordered regions span residues 1–21, 218–372, 389–537, and 569–621; these read MPSA…RSDQ, ELQN…PKSG, ERVQ…GVVN, and ISTP…GETY. Residues 18 to 219 are a coiled coil; the sequence is RSDQLAWYKS…IHEKLRNAEL (202 aa). Composition is skewed to low complexity over residues 264–288 and 300–310; these read SLMS…RKSM and SASDSSFGSRS. Residues 323–341 are compositionally biased toward polar residues; sequence SRATSYAFTSNRPTPSVTN. 3 stretches are compositionally biased toward low complexity: residues 353–362, 404–414, and 469–496; these read NENTNKHNNN, SPSRTSSRSGS, and SRPS…PSTR. Residues 599-613 show a composition bias toward basic and acidic residues; the sequence is DRLEGDMGPPERKSN.

Belongs to the nudE family. As to quaternary structure, self-associates. Interacts with nudF.

Its subcellular location is the cytoplasm. The protein localises to the cytoskeleton. Functionally, required for nuclear migration within hyphae during vegetative growth. The chain is Nuclear distribution protein nudE homolog 1 (nde1) from Aspergillus fumigatus (strain ATCC MYA-4609 / CBS 101355 / FGSC A1100 / Af293) (Neosartorya fumigata).